A 214-amino-acid polypeptide reads, in one-letter code: Germin-like protein (214 aa).

The signal sequence occupies residues 1 to 22 (MVMMRIFFFLFLLAFPVFTANA). Cys-28 and Cys-44 are oxidised to a cystine. Residues 58–204 (SGLAKPGNTT…TTCLDEATIK (147 aa)) enclose the Cupin type-1 domain. Residues His-106, His-108, and Glu-113 each contribute to the Mn(2+) site.

The protein belongs to the germin family. In terms of assembly, oligomer (believed to be a pentamer but probably hexamer). Cotyledons and leaves.

It is found in the secreted. It localises to the extracellular space. Its subcellular location is the apoplast. The polypeptide is Germin-like protein (GLP) (Ipomoea nil (Japanese morning glory)).